The chain runs to 711 residues: Long-chain-fatty-acid--CoA ligase 4 (711 aa).

A helical; Signal-anchor for type III membrane protein membrane pass occupies residues 8–28 (LTIILLPVHLLITIYSALIFI). At 29 to 711 (PWYFLTNAKK…KDIERMYGGK (683 aa)) the chain is on the cytoplasmic side. Position 447 is a phosphoserine (S447).

Belongs to the ATP-dependent AMP-binding enzyme family. Requires Mg(2+) as cofactor. In terms of tissue distribution, abundant in steroidogenic tissues, also found in the kidney, brain and liver.

It is found in the mitochondrion outer membrane. The protein localises to the peroxisome membrane. Its subcellular location is the microsome membrane. It localises to the endoplasmic reticulum membrane. The protein resides in the cell membrane. It catalyses the reaction a long-chain fatty acid + ATP + CoA = a long-chain fatty acyl-CoA + AMP + diphosphate. The catalysed reaction is (5Z,8Z,11Z,14Z)-eicosatetraenoate + ATP + CoA = (5Z,8Z,11Z,14Z)-eicosatetraenoyl-CoA + AMP + diphosphate. The enzyme catalyses 15-hydroxy-(5Z,8Z,11Z,13E)-eicosatetraenoate + ATP + CoA = 15-hydroxy-(5Z,8Z,11Z,13E)-eicosatetraenoyl-CoA + AMP + diphosphate. It carries out the reaction 12-hydroxy-(5Z,8Z,10E,14Z)-eicosatetraenoate + ATP + CoA = 12-hydroxy-(5Z,8Z,10E,14Z)-eicosatetraenoyl-CoA + AMP + diphosphate. It catalyses the reaction 5-hydroxy-(6E,8Z,11Z,14Z)-eicosatetraenoate + ATP + CoA = 5-hydroxy-(6E,8Z,11Z,14Z)-eicosatetraenoyl-CoA + AMP + diphosphate. The catalysed reaction is 5,6-epoxy-(8Z,11Z,14Z)-eicosatrienoate + ATP + CoA = 5,6-epoxy-(8Z,11Z,14Z)-eicosatrienoyl-CoA + AMP + diphosphate. The enzyme catalyses 14,15-epoxy-(5Z,8Z,11Z)-eicosatrienoate + ATP + CoA = 14,15-epoxy-(5Z,8Z,11Z)-eicosatrienoyl-CoA + AMP + diphosphate. It carries out the reaction 11,12-epoxy-(5Z,8Z,14Z)-eicosatrienoate + ATP + CoA = 11,12-epoxy-(5Z,8Z,14Z)-eicosatrienoyl-CoA + AMP + diphosphate. It catalyses the reaction 8,9-epoxy-(5Z,11Z,14Z)-eicosatrienoate + ATP + CoA = 8,9-epoxy-(5Z,11Z,14Z)-eicosatrienoyl-CoA + AMP + diphosphate. The catalysed reaction is hexadecanoate + ATP + CoA = hexadecanoyl-CoA + AMP + diphosphate. The enzyme catalyses (E)-hexadec-2-enoate + ATP + CoA = (2E)-hexadecenoyl-CoA + AMP + diphosphate. With respect to regulation, both triacsin C and rosiglitazone inhibit arachidonoyl-CoA ligase activity. Its function is as follows. Catalyzes the conversion of long-chain fatty acids to their active form acyl-CoA for both synthesis of cellular lipids, and degradation via beta-oxidation. Preferentially activates arachidonate and eicosapentaenoate as substrates. Preferentially activates 8,9-EET &gt; 14,15-EET &gt; 5,6-EET &gt; 11,12-EET. Modulates glucose-stimulated insulin secretion by regulating the levels of unesterified EETs. Modulates prostaglandin E2 secretion. This is Long-chain-fatty-acid--CoA ligase 4 (Acsl4) from Mus musculus (Mouse).